The chain runs to 185 residues: Transcription termination/antitermination protein NusG (185 aa).

The region spanning 134–163 (VGQQVRIVEGPFATFSGEVEEVMSERNKVR) is the KOW domain.

The protein belongs to the NusG family.

Participates in transcription elongation, termination and antitermination. In Treponema pallidum (strain Nichols), this protein is Transcription termination/antitermination protein NusG.